Consider the following 595-residue polypeptide: UvrABC system protein C (595 aa).

Residues 17–94 (IEPGCYLMKD…IKQYQPRYNI (78 aa)) enclose the GIY-YIG domain. A UVR domain is found at 199-234 (KTILHNLEQKMQESSESLDFERAKEYRDLIQHIHNL).

Belongs to the UvrC family. Interacts with UvrB in an incision complex.

Its subcellular location is the cytoplasm. Its function is as follows. The UvrABC repair system catalyzes the recognition and processing of DNA lesions. UvrC both incises the 5' and 3' sides of the lesion. The N-terminal half is responsible for the 3' incision and the C-terminal half is responsible for the 5' incision. The protein is UvrABC system protein C of Staphylococcus saprophyticus subsp. saprophyticus (strain ATCC 15305 / DSM 20229 / NCIMB 8711 / NCTC 7292 / S-41).